A 682-amino-acid chain; its full sequence is Probable potassium transport system protein Kup (682 aa).

The next 12 helical transmembrane spans lie at 13-33 (GLLVSIGIVYGDIGTSPLYVM), 55-75 (ISLILWTITLLTTVKYVLIAL), 98-118 (WLVIPALVGGAALLADGTLTP), 138-158 (IPVPNQNSVIMITIVILLFLF), 171-191 (TFGPIMLVWFTFLGLTGIMNL), 217-237 (VGVLILGAVFLATTGAEALYS), 250-270 (SWPYVFICLALNYLGQGVWIL), 295-315 (FFAIILATLAAIIASQALITG), 344-364 (LFIPSINKMLCAATIGIVFLF), 375-395 (GLAITVTMLMTTVLLFEYLSL), 405-425 (VFLLLFGAIETMFLISSLAKF), and 428-448 (GGYVTVIIAAFIGAIMYIWYF).

It belongs to the HAK/KUP transporter (TC 2.A.72) family.

Its subcellular location is the cell membrane. The enzyme catalyses K(+)(in) + H(+)(in) = K(+)(out) + H(+)(out). Functionally, transport of potassium into the cell. Likely operates as a K(+):H(+) symporter. The polypeptide is Probable potassium transport system protein Kup (Lactobacillus gasseri (strain ATCC 33323 / DSM 20243 / BCRC 14619 / CIP 102991 / JCM 1131 / KCTC 3163 / NCIMB 11718 / NCTC 13722 / AM63)).